The primary structure comprises 463 residues: Cysteine--tRNA ligase (463 aa).

C28 is a binding site for Zn(2+). A 'HIGH' region motif is present at residues 30–40; sequence ITIYDLCHIGH. Zn(2+)-binding residues include C209, H234, and E238. The 'KMSKS' region motif lies at 266 to 270; the sequence is KMSKS. K269 provides a ligand contact to ATP.

It belongs to the class-I aminoacyl-tRNA synthetase family. Monomer. The cofactor is Zn(2+).

It localises to the cytoplasm. The catalysed reaction is tRNA(Cys) + L-cysteine + ATP = L-cysteinyl-tRNA(Cys) + AMP + diphosphate. This is Cysteine--tRNA ligase from Proteus mirabilis (strain HI4320).